The primary structure comprises 272 residues: MKTVSQLIDMKQKQTKISMVTAYDFPSAKQVEAAGIDMILVGDSLGMTVLGYESTVQVTLADMIHHGRAVRRGAPNTFVVVDMPIGAVGISMTQDLNHALKLYQETNANAIKAEGAHITPFIEKATAIGIPVVAHLGLTPQSVGVMGYKLQGATKEAAEQLILDAKNVEQAGAVALVLEAIPNDLAEEISKHLTIPVIGIGAGKGTDGQVLVYHDMLNYGVEHKAKFVKQFADFSVGVDGLKQYDQEVKSGAFPSEEYTYKKKIMNEVNNND.

Positions 43 and 82 each coordinate Mg(2+). 3-methyl-2-oxobutanoate contacts are provided by residues 43–44, Asp-82, and Lys-112; that span reads DS. Glu-114 is a binding site for Mg(2+). The active-site Proton acceptor is Glu-179.

It belongs to the PanB family. Homodecamer; pentamer of dimers. It depends on Mg(2+) as a cofactor.

It localises to the cytoplasm. It carries out the reaction 3-methyl-2-oxobutanoate + (6R)-5,10-methylene-5,6,7,8-tetrahydrofolate + H2O = 2-dehydropantoate + (6S)-5,6,7,8-tetrahydrofolate. Its pathway is cofactor biosynthesis; (R)-pantothenate biosynthesis; (R)-pantoate from 3-methyl-2-oxobutanoate: step 1/2. Catalyzes the reversible reaction in which hydroxymethyl group from 5,10-methylenetetrahydrofolate is transferred onto alpha-ketoisovalerate to form ketopantoate. The protein is 3-methyl-2-oxobutanoate hydroxymethyltransferase of Staphylococcus aureus (strain JH1).